Here is a 44-residue protein sequence, read N- to C-terminus: Protein PsbN (44 aa).

The chain crosses the membrane as a helical span at residues Phe-6–Val-26.

Belongs to the PsbN family.

The protein localises to the plastid. It localises to the chloroplast thylakoid membrane. Functionally, may play a role in photosystem I and II biogenesis. The sequence is that of Protein PsbN from Tupiella akineta (Green alga).